Reading from the N-terminus, the 197-residue chain is Glycerol-3-phosphate acyltransferase (197 aa).

5 helical membrane-spanning segments follow: residues 1–21 (MNIL…GFLI), 78–98 (LIEV…IWLG), 111–131 (MFLA…LIVL), 136–155 (FVSL…MFFY), and 159–176 (FIHT…LVIW).

The protein belongs to the PlsY family. In terms of assembly, probably interacts with PlsX.

Its subcellular location is the cell inner membrane. The enzyme catalyses an acyl phosphate + sn-glycerol 3-phosphate = a 1-acyl-sn-glycero-3-phosphate + phosphate. Its pathway is lipid metabolism; phospholipid metabolism. Functionally, catalyzes the transfer of an acyl group from acyl-phosphate (acyl-PO(4)) to glycerol-3-phosphate (G3P) to form lysophosphatidic acid (LPA). This enzyme utilizes acyl-phosphate as fatty acyl donor, but not acyl-CoA or acyl-ACP. This chain is Glycerol-3-phosphate acyltransferase, found in Prochlorococcus marinus (strain MIT 9215).